A 450-amino-acid polypeptide reads, in one-letter code: Divalent metal cation transporter MntH (450 aa).

The next 11 membrane-spanning stretches (helical) occupy residues 34–54 (LSFL…GNWI), 61–81 (AQYG…AMLL), 108–128 (IAII…IAEV), 141–161 (IPLI…LFIM), 170–190 (AIVG…VYIS), 212–232 (GILY…NLYL), 263–283 (IQLS…ASLF), 305–325 (PVLG…ALLA), 361–381 (SLAV…AAKI), 383–403 (QLLV…LIPL), and 422–442 (VNII…YLIV).

The protein belongs to the NRAMP family.

Its subcellular location is the cell membrane. In terms of biological role, h(+)-stimulated, divalent metal cation uptake system. The protein is Divalent metal cation transporter MntH of Staphylococcus aureus (strain JH1).